Here is a 201-residue protein sequence, read N- to C-terminus: Dephospho-CoA kinase (201 aa).

Positions 4 to 201 (SVGLTGNIAS…KYLREAKIKQ (198 aa)) constitute a DPCK domain. ATP is bound at residue 12–17 (ASGKST).

This sequence belongs to the CoaE family.

The protein resides in the cytoplasm. It catalyses the reaction 3'-dephospho-CoA + ATP = ADP + CoA + H(+). It functions in the pathway cofactor biosynthesis; coenzyme A biosynthesis; CoA from (R)-pantothenate: step 5/5. Catalyzes the phosphorylation of the 3'-hydroxyl group of dephosphocoenzyme A to form coenzyme A. In Legionella pneumophila subsp. pneumophila (strain Philadelphia 1 / ATCC 33152 / DSM 7513), this protein is Dephospho-CoA kinase.